The sequence spans 1219 residues: FK506-binding protein 15 (1219 aa).

M1 carries the post-translational modification N-acetylmethionine. Residues S14 and S23 each carry the phosphoserine modification. Positions 41-66 (YTAPKQPKKGQGTAATGNQATPKTAP) are disordered. The span at 53 to 66 (TAATGNQATPKTAP) shows a compositional bias: polar residues. Positions 72–169 (PTILVATAVH…AVEFNKQVCI (98 aa)) are important for function in growth cone organization. K92 is subject to N6-acetyllysine. One can recognise a PPIase FKBP-type domain in the interval 197 to 290 (GDSLEVAYTG…VFEVEVRRVK (94 aa)). The segment at 294-349 (DSGSDGHSVSSRDSAAPSPIPGADNLSADPVVSPPTSIPFKSGEPALRTKSNSLSE) is disordered. Residues S307, S311, S326, S344, S346, and S356 each carry the phosphoserine modification. The interval 381-433 (PQLDSNDSEIEDVNTLQGGGQPVVTPSVQPSLHPAHPALPQMTSQAPQPSVTG) is disordered. Residues 421–433 (QMTSQAPQPSVTG) show a composition bias toward polar residues. 3 coiled-coil regions span residues 522–789 (AVSK…TDQA), 818–878 (DEHL…GVEA), and 925–951 (TLQL…AEER). Position 619 is a phosphoserine (S619). The interval 739-761 (LEKNLSERKKKSAQERSQAEEEI) is disordered. The disordered stretch occupies residues 931-1219 (QQEQEKEESS…DDDDDIDWLG (289 aa)). Phosphoserine occurs at positions 939, 940, 941, and 956. Residues 957-971 (QEQSASASSGQPQAP) show a composition bias toward low complexity. 6 positions are modified to phosphoserine: S979, S1024, S1056, S1061, S1065, and S1097. The segment covering 1090–1100 (QESSTRLSLTS) has biased composition (polar residues). T1099 is subject to Phosphothreonine. At S1114 the chain carries Phosphoserine. Positions 1123-1139 (LKKDDVTSSTGPHKELS) are enriched in basic and acidic residues. Phosphoserine is present on residues S1158, S1161, S1162, S1164, and S1195. The residue at position 1203 (T1203) is a Phosphothreonine. Positions 1207–1219 (GDDDDDDDIDWLG) are enriched in acidic residues.

It belongs to the FKBP-type PPIase family. As to quaternary structure, interacts with WIP and actin. Interacts with TBC1D23.

Its subcellular location is the cytoplasm. It is found in the cell projection. The protein resides in the axon. It localises to the early endosome. In terms of biological role, may be involved in the cytoskeletal organization of neuronal growth cones. Seems to be inactive as a PPIase. Involved in the transport of early endosomes at the level of transition between microfilament-based and microtubule-based movement. In Homo sapiens (Human), this protein is FK506-binding protein 15 (FKBP15).